The sequence spans 444 residues: MAKKYFGTDGVRGEVGQFPITPDFVLKLGYAAGQVLVQHDTDQKPTVLIGKDTRISGYMLEAALVAGFTAAGVNVVQTGPLPTPGVAYLTRALRLSAGVMISASHNAYSDNGIKFFAEGGVKLSDEIELEIEAKIDEEMKTQPSARLGRARRISGADDRYIEFCKSTFPSHSDLRGLKLVIDTANGAGYGVAPKVFHELGAQVVSIGDEPNGYNINEKCGATYTKTLQAAVLQHEADYGIALDGDGDRLMMVDKNGKVYDGDSLIYVIAKARAREGINIGGVVGTVMTNMAMEIALKEQGVDFCRAKVGDRYVLEQLNQRSWLIGGEASGHILCMDKHNTGDGIISALQVLAALQTLNQDLATVCADWQPYPQTMINVRIQKGQKWQEASKDVLAEVEKELEGKGRVVLRASGTEPVVRVMVEARQADWARDGAERIASAIGSL.

The active-site Phosphoserine intermediate is serine 104. Positions 104, 243, 245, and 247 each coordinate Mg(2+). Serine 104 bears the Phosphoserine mark.

It belongs to the phosphohexose mutase family. The cofactor is Mg(2+). In terms of processing, activated by phosphorylation.

The enzyme catalyses alpha-D-glucosamine 1-phosphate = D-glucosamine 6-phosphate. Functionally, catalyzes the conversion of glucosamine-6-phosphate to glucosamine-1-phosphate. The chain is Phosphoglucosamine mutase from Neisseria meningitidis serogroup A / serotype 4A (strain DSM 15465 / Z2491).